The following is a 414-amino-acid chain: Gamma-glutamyl phosphate reductase (414 aa).

It belongs to the gamma-glutamyl phosphate reductase family.

Its subcellular location is the cytoplasm. It catalyses the reaction L-glutamate 5-semialdehyde + phosphate + NADP(+) = L-glutamyl 5-phosphate + NADPH + H(+). It participates in amino-acid biosynthesis; L-proline biosynthesis; L-glutamate 5-semialdehyde from L-glutamate: step 2/2. Functionally, catalyzes the NADPH-dependent reduction of L-glutamate 5-phosphate into L-glutamate 5-semialdehyde and phosphate. The product spontaneously undergoes cyclization to form 1-pyrroline-5-carboxylate. The chain is Gamma-glutamyl phosphate reductase from Xanthomonas oryzae pv. oryzae (strain KACC10331 / KXO85).